Reading from the N-terminus, the 154-residue chain is NADPH-dependent 7-cyano-7-deazaguanine reductase (154 aa).

Positions 1 to 21 (MPNTDVSSLSMLGQQTETAQS) are enriched in polar residues. The disordered stretch occupies residues 1-28 (MPNTDVSSLSMLGQQTETAQSPEEAVLE). Cys52 acts as the Thioimide intermediate in catalysis. The Proton donor role is filled by Asp59. Substrate-binding positions include 74 to 76 (VES) and 93 to 94 (HE).

It belongs to the GTP cyclohydrolase I family. QueF type 1 subfamily.

Its subcellular location is the cytoplasm. The enzyme catalyses 7-aminomethyl-7-carbaguanine + 2 NADP(+) = 7-cyano-7-deazaguanine + 2 NADPH + 3 H(+). It participates in tRNA modification; tRNA-queuosine biosynthesis. In terms of biological role, catalyzes the NADPH-dependent reduction of 7-cyano-7-deazaguanine (preQ0) to 7-aminomethyl-7-deazaguanine (preQ1). The polypeptide is NADPH-dependent 7-cyano-7-deazaguanine reductase (Rhizobium johnstonii (strain DSM 114642 / LMG 32736 / 3841) (Rhizobium leguminosarum bv. viciae)).